The chain runs to 309 residues: Aspartate carbamoyltransferase catalytic subunit (309 aa).

Positions 58 and 59 each coordinate carbamoyl phosphate. L-aspartate is bound at residue lysine 86. Carbamoyl phosphate is bound by residues arginine 108, histidine 136, and glutamine 139. L-aspartate contacts are provided by arginine 170 and arginine 224. Carbamoyl phosphate-binding residues include glycine 266 and proline 267.

It belongs to the aspartate/ornithine carbamoyltransferase superfamily. ATCase family. As to quaternary structure, heterododecamer (2C3:3R2) of six catalytic PyrB chains organized as two trimers (C3), and six regulatory PyrI chains organized as three dimers (R2).

The catalysed reaction is carbamoyl phosphate + L-aspartate = N-carbamoyl-L-aspartate + phosphate + H(+). The protein operates within pyrimidine metabolism; UMP biosynthesis via de novo pathway; (S)-dihydroorotate from bicarbonate: step 2/3. Its function is as follows. Catalyzes the condensation of carbamoyl phosphate and aspartate to form carbamoyl aspartate and inorganic phosphate, the committed step in the de novo pyrimidine nucleotide biosynthesis pathway. This chain is Aspartate carbamoyltransferase catalytic subunit, found in Campylobacter concisus (strain 13826).